Here is a 194-residue protein sequence, read N- to C-terminus: Flagellar transcriptional regulator FlhC (194 aa).

Zn(2+) contacts are provided by Cys-139, Cys-142, Cys-159, and Cys-162.

This sequence belongs to the FlhC family. As to quaternary structure, heterohexamer composed of two FlhC and four FlhD subunits. Each FlhC binds a FlhD dimer, forming a heterotrimer, and a hexamer assembles by dimerization of two heterotrimers. The cofactor is Zn(2+).

The protein localises to the cytoplasm. In terms of biological role, functions in complex with FlhD as a master transcriptional regulator that regulates transcription of several flagellar and non-flagellar operons by binding to their promoter region. Activates expression of class 2 flagellar genes, including fliA, which is a flagellum-specific sigma factor that turns on the class 3 genes. Also regulates genes whose products function in a variety of physiological pathways. This is Flagellar transcriptional regulator FlhC from Serratia marcescens.